Reading from the N-terminus, the 629-residue chain is DNA mismatch repair protein MutL (629 aa).

This sequence belongs to the DNA mismatch repair MutL/HexB family.

Its function is as follows. This protein is involved in the repair of mismatches in DNA. It is required for dam-dependent methyl-directed DNA mismatch repair. May act as a 'molecular matchmaker', a protein that promotes the formation of a stable complex between two or more DNA-binding proteins in an ATP-dependent manner without itself being part of a final effector complex. In Haemophilus influenzae (strain PittGG), this protein is DNA mismatch repair protein MutL.